Here is a 548-residue protein sequence, read N- to C-terminus: Mercuric reductase (548 aa).

The region spanning 1–65 (MTEITVNGMT…AIAALGYQGS (65 aa)) is the HMA domain. Positions 11 and 14 each coordinate a metal cation. Positions 97, 117, and 122 each coordinate FAD. The cysteines at positions 123 and 128 are disulfide-linked. FAD is bound by residues K132, A198, D390, and V398. Hg(2+) is bound by residues C545 and C546.

Belongs to the class-I pyridine nucleotide-disulfide oxidoreductase family. Homodimer. FAD serves as cofactor.

It catalyses the reaction Hg + NADP(+) + H(+) = Hg(2+) + NADPH. In terms of biological role, resistance to Hg(2+) in bacteria appears to be governed by a specialized system which includes mercuric reductase. MerA protein is responsible for volatilizing mercury as Hg(0). The chain is Mercuric reductase (merA) from Pseudomonas fluorescens.